A 447-amino-acid chain; its full sequence is N-succinylarginine dihydrolase (447 aa).

Substrate-binding positions include 21–30 (AGLAHGNVAS), Asn112, and 139–140 (HR). Residue Glu176 is part of the active site. A substrate-binding site is contributed by Arg215. The active site involves His251. Substrate-binding residues include Asp253 and Asn364. The Nucleophile role is filled by Cys370.

Belongs to the succinylarginine dihydrolase family. As to quaternary structure, homodimer.

It catalyses the reaction N(2)-succinyl-L-arginine + 2 H2O + 2 H(+) = N(2)-succinyl-L-ornithine + 2 NH4(+) + CO2. It functions in the pathway amino-acid degradation; L-arginine degradation via AST pathway; L-glutamate and succinate from L-arginine: step 2/5. In terms of biological role, catalyzes the hydrolysis of N(2)-succinylarginine into N(2)-succinylornithine, ammonia and CO(2). This Chromohalobacter salexigens (strain ATCC BAA-138 / DSM 3043 / CIP 106854 / NCIMB 13768 / 1H11) protein is N-succinylarginine dihydrolase.